A 164-amino-acid chain; its full sequence is C-type natriuretic peptide (164 aa).

An N-terminal signal peptide occupies residues 1-23 (MVASRLAAGGLLLLALLALALDG). Disordered regions lie at residues 24-93 (KPAP…AAAA) and 115-134 (HPEH…GASR). A propeptide spanning residues 24–142 (KPAPPQPLRK…SRRLKGVAKK (119 aa)) is cleaved from the precursor. Over residues 58 to 67 (AGGGGGGGRS) the composition is skewed to gly residues. Over residues 68–93 (GSKAANAAPTAPKSKGGAAAAAAAAA) the composition is skewed to low complexity. Residues 121 to 132 (GGGGGGGGGGGA) show a composition bias toward gly residues. Cysteines 148 and 164 form a disulfide.

It belongs to the natriuretic peptide family. In terms of tissue distribution, expressed by the venom gland.

The protein resides in the secreted. Functionally, snake venom natriuretic peptide that has a vasorelaxant activity in rat aortic strips and a diuretic potency in anesthetized rats. May act by activating natriuretic receptors (NPR1 and/or NPR2). The polypeptide is C-type natriuretic peptide (Philodryas olfersii (Green snake)).